Here is a 406-residue protein sequence, read N- to C-terminus: B3 domain-containing protein Os11g0197600 (406 aa).

Positions 1 to 20 (MVVREKQGGRMGKGKGKGKE) are disordered. A DNA-binding region (TF-B3 1) is located at residues 30–123 (RSFFRVLLTL…QFSVTVFEPS (94 aa)). A disordered region spans residues 199 to 245 (ESSRRKRAGASAGKSKVTSTSHNSTRGSSCSSDEDNSSSKSPNPPFL). The segment covering 214 to 225 (KVTSTSHNSTRG) has biased composition (polar residues). Residues 298-393 (AVQIMMESYV…NIKVHIYRVV (96 aa)) constitute a DNA-binding region (TF-B3 2).

It localises to the nucleus. This is B3 domain-containing protein Os11g0197600 from Oryza sativa subsp. japonica (Rice).